A 408-amino-acid polypeptide reads, in one-letter code: Histone acetyltransferase type B subunit 2 (408 aa).

WD repeat units lie at residues 120–160 (KHEQ…KDHG), 167–207 (YHKE…NKSP), 213–253 (VHTD…AIQK), 255–295 (SVSS…KPLH), and 299–339 (GHED…AEQQ). The interval 341-345 (DDAYD) is interaction with the histone H4 N-terminus. The WD 6 repeat unit spans residues 356 to 396 (GHRSPVNEFSHNSNVPWLMCSVEEENVLQIWKPANKIVRPP).

It belongs to the WD repeat RBAP46/RBAP48/MSI1 family. As to quaternary structure, component of the HAT-B complex composed of at least HAT1 and HAT2. The HAT-B complex binds to histone H4 tail.

The protein localises to the cytoplasm. Its subcellular location is the nucleus. Its function is as follows. Regulatory subunit of the histone acetylase B (HAT-B) complex. The complex acetylates 'Lys-12' of histone H4 which is required for telomeric silencing. The chain is Histone acetyltransferase type B subunit 2 (HAT2) from Kluyveromyces lactis (strain ATCC 8585 / CBS 2359 / DSM 70799 / NBRC 1267 / NRRL Y-1140 / WM37) (Yeast).